The following is a 179-amino-acid chain: Large ribosomal subunit protein uL5 (179 aa).

This sequence belongs to the universal ribosomal protein uL5 family. In terms of assembly, part of the 50S ribosomal subunit; part of the 5S rRNA/L5/L18/L25 subcomplex. Contacts the 5S rRNA and the P site tRNA. Forms a bridge to the 30S subunit in the 70S ribosome.

Its function is as follows. This is one of the proteins that bind and probably mediate the attachment of the 5S RNA into the large ribosomal subunit, where it forms part of the central protuberance. In the 70S ribosome it contacts protein S13 of the 30S subunit (bridge B1b), connecting the 2 subunits; this bridge is implicated in subunit movement. Contacts the P site tRNA; the 5S rRNA and some of its associated proteins might help stabilize positioning of ribosome-bound tRNAs. The chain is Large ribosomal subunit protein uL5 from Pseudomonas savastanoi pv. phaseolicola (strain 1448A / Race 6) (Pseudomonas syringae pv. phaseolicola (strain 1448A / Race 6)).